We begin with the raw amino-acid sequence, 375 residues long: DNA replication and repair protein RecF (375 aa).

30 to 37 lines the ATP pocket; the sequence is GNNAQGKS.

This sequence belongs to the RecF family.

The protein localises to the cytoplasm. The RecF protein is involved in DNA metabolism; it is required for DNA replication and normal SOS inducibility. RecF binds preferentially to single-stranded, linear DNA. It also seems to bind ATP. The sequence is that of DNA replication and repair protein RecF from Microcystis aeruginosa (strain NIES-843 / IAM M-2473).